The sequence spans 141 residues: ATP synthase epsilon chain (141 aa).

The protein belongs to the ATPase epsilon chain family. F-type ATPases have 2 components, CF(1) - the catalytic core - and CF(0) - the membrane proton channel. CF(1) has five subunits: alpha(3), beta(3), gamma(1), delta(1), epsilon(1). CF(0) has three main subunits: a, b and c.

The protein localises to the cell inner membrane. Produces ATP from ADP in the presence of a proton gradient across the membrane. This chain is ATP synthase epsilon chain, found in Pseudomonas fluorescens (strain ATCC BAA-477 / NRRL B-23932 / Pf-5).